The primary structure comprises 210 residues: Regulator of G-protein signaling 17 (210 aa).

The disordered stretch occupies residues 1-21; that stretch reads MRKRQQSQNEGTPAVSQAPGN. Residues 84-200 enclose the RGS domain; sequence NFDKMMKAPA…LNSQIYKSFV (117 aa). At Tyr137 the chain carries Phosphotyrosine.

In terms of assembly, interacts with GNAI1 and GNAQ. Interacts with GNAZ and GNAI2. Interacts with OPRM1. Forms a complex with mu-opioid receptors and G(alpha)z/i2 subunits, including GNAZ and GNAI2; the formation of this complex results in mu-opioid receptor desensitization. Interacts with HINT1. N- and O-glycosylated in synapsomal membranes. Post-translationally, serine phosphorylated in synapsomal membranes. In terms of processing, sumoylated with SUMO1 and SUM02 in synaptosomes. The sumoylated forms act as a scaffold for sequestering mu-opioid receptor-activated G(alpha) subunits. Desumoylated by HINT1. Predominantly expressed in the cerebellum. Also expressed in the cortex and medulla. Weakly expressed in a number of peripheral tissues notably spleen, lung and leukocytes.

Its subcellular location is the membrane. The protein localises to the synapse. It localises to the synaptosome. It is found in the nucleus. The protein resides in the cytoplasm. Functionally, regulates G protein-coupled receptor signaling cascades, including signaling via muscarinic acetylcholine receptor CHRM2 and dopamine receptor DRD2. Inhibits signal transduction by increasing the GTPase activity of G protein alpha subunits, thereby driving them into their inactive GDP-bound form. Binds selectively to GNAZ and GNAI2 subunits, accelerates their GTPase activity and regulates their signaling activities. Negatively regulates mu-opioid receptor-mediated activation of the G-proteins. The protein is Regulator of G-protein signaling 17 (RGS17) of Homo sapiens (Human).